Reading from the N-terminus, the 91-residue chain is MPRSLKKGPFVDAHLFAKVEAAVASNSRKPIKTWSRRSMILPDFVGLTISVHNGRNHVPVIVTEHMVGHKLGEFAPTRTYRGHGVDKKSKR.

The protein belongs to the universal ribosomal protein uS19 family.

Protein S19 forms a complex with S13 that binds strongly to the 16S ribosomal RNA. In Acinetobacter baumannii (strain AB307-0294), this protein is Small ribosomal subunit protein uS19.